The sequence spans 149 residues: Urease accessory protein UreE (149 aa).

The protein belongs to the UreE family.

It is found in the cytoplasm. Its function is as follows. Involved in urease metallocenter assembly. Binds nickel. Probably functions as a nickel donor during metallocenter assembly. The protein is Urease accessory protein UreE of Prochlorococcus marinus (strain MIT 9215).